A 664-amino-acid polypeptide reads, in one-letter code: Protein-arginine deiminase type-3 (664 aa).

This sequence belongs to the protein arginine deiminase family. Requires Ca(2+) as cofactor. As to expression, epidermis and hair follicles.

The protein localises to the cytoplasm. It carries out the reaction L-arginyl-[protein] + H2O = L-citrullyl-[protein] + NH4(+). Catalyzes the deimination of arginine residues of proteins. The protein is Protein-arginine deiminase type-3 (Padi3) of Rattus norvegicus (Rat).